The sequence spans 117 residues: Protein P16 (117 aa).

A helical transmembrane segment spans residues L7–R24.

It localises to the virion membrane. Its function is as follows. Protein of the infection vertex complex, which increases the vertex stability. Anchors the vertex structure to the viral membrane. Essential for viral infectivity. The protein is Protein P16 (XVI) of Enterobacteria phage PRD1 (Bacteriophage PRD1).